The primary structure comprises 477 residues: Proton extrusion protein PxcA (477 aa).

3 helical membrane passes run 239-259 (FILL…ITFV), 354-374 (GIKN…IIST), and 437-457 (FNFL…KYWI).

Belongs to the CemA family.

The protein localises to the cell inner membrane. Its function is as follows. Required for H(+) efflux immediately after light irradiation to form a rapid H(+) concentration gradient across the thylakoid membranes. Together with PxcL, contributes to transient H(+) uptake following dark to light transition. In Trichodesmium erythraeum (strain IMS101), this protein is Proton extrusion protein PxcA.